A 580-amino-acid polypeptide reads, in one-letter code: UPF0329 protein ECU06_0080 (580 aa).

Over residues 308-330 (RQKRREREMEKSMKELLRDEEKA) the composition is skewed to basic and acidic residues. A disordered region spans residues 308–384 (RQKRREREME…KTGKKSKGGR (77 aa)). A compositionally biased stretch (basic residues) spans 331-340 (KSKKGRKKKS). Residues 351–363 (SETEEVEASEEME) show a composition bias toward acidic residues. Positions 372 to 384 (ARRKTGKKSKGGR) are enriched in basic residues.

Belongs to the UPF0329 family.

This chain is UPF0329 protein ECU06_0080, found in Encephalitozoon cuniculi (strain GB-M1) (Microsporidian parasite).